The sequence spans 232 residues: MKKTAVIVFSGGQDSTTCLIHALPLYDEVHCITFDYGQRHHAEIETAQRLSKQLGATVHKVLDASLLNELAISSLTRDNIPVPTVNSSGESLPSTFVPGRNILFLTLASIYAYQVKAETVITGVCETDFSGYPDCRDEFVKALNKALELGMEYKLRLETPLMWLNKAETWALADYHNQLELVREQTLTCYNGIMGSGCANCDACNLRAKGLNAYLENKTQVMDSLKSKMGLK.

9–19 contacts ATP; sequence FSGGQDSTTCL. Zn(2+)-binding residues include Cys189, Cys198, Cys201, and Cys204.

This sequence belongs to the QueC family. The cofactor is Zn(2+).

It catalyses the reaction 7-carboxy-7-deazaguanine + NH4(+) + ATP = 7-cyano-7-deazaguanine + ADP + phosphate + H2O + H(+). Its pathway is purine metabolism; 7-cyano-7-deazaguanine biosynthesis. Catalyzes the ATP-dependent conversion of 7-carboxy-7-deazaguanine (CDG) to 7-cyano-7-deazaguanine (preQ(0)). The polypeptide is 7-cyano-7-deazaguanine synthase 2 (Pseudomonas fluorescens (strain ATCC BAA-477 / NRRL B-23932 / Pf-5)).